Here is a 107-residue protein sequence, read N- to C-terminus: Nucleoid-associated protein BMEA_A0033 (107 aa).

This sequence belongs to the YbaB/EbfC family. In terms of assembly, homodimer.

The protein resides in the cytoplasm. It is found in the nucleoid. Its function is as follows. Binds to DNA and alters its conformation. May be involved in regulation of gene expression, nucleoid organization and DNA protection. This is Nucleoid-associated protein BMEA_A0033 from Brucella melitensis biotype 2 (strain ATCC 23457).